We begin with the raw amino-acid sequence, 675 residues long: L-type lectin-domain containing receptor kinase IX.2 (675 aa).

The first 35 residues, Met1–Ser35, serve as a signal peptide directing secretion. N-linked (GlcNAc...) asparagine glycosylation is found at Asn9, Asn39, Asn110, Asn146, Asn179, Asn186, Asn191, and Asn212. The interval Leu36–Leu269 is legume-lectin like. The Extracellular portion of the chain corresponds to Leu36 to Arg281. The chain crosses the membrane as a helical span at residues Ile282–Thr302. Residues Thr303–Arg675 lie on the Cytoplasmic side of the membrane. Residues Phe350 to Glu631 form the Protein kinase domain. Residues Leu356 to Val364 and Lys379 contribute to the ATP site. Catalysis depends on Asp475, which acts as the Proton acceptor.

In the C-terminal section; belongs to the protein kinase superfamily. Ser/Thr protein kinase family. The protein in the N-terminal section; belongs to the leguminous lectin family. Interacts with ABCG40.

Its subcellular location is the cell membrane. The enzyme catalyses L-seryl-[protein] + ATP = O-phospho-L-seryl-[protein] + ADP + H(+). It carries out the reaction L-threonyl-[protein] + ATP = O-phospho-L-threonyl-[protein] + ADP + H(+). Functionally, promotes hydrogen peroxide H(2)O(2) production and cell death. Involved in resistance response to the pathogenic oomycetes Phytophthora infestans and Phytophthora capsici. The sequence is that of L-type lectin-domain containing receptor kinase IX.2 from Arabidopsis thaliana (Mouse-ear cress).